A 139-amino-acid chain; its full sequence is Phosphoribosyl-AMP cyclohydrolase (139 aa).

Residue Asp91 participates in Mg(2+) binding. Position 92 (Cys92) interacts with Zn(2+). Mg(2+) is bound by residues Asp93 and Asp95. Cys110 and Cys117 together coordinate Zn(2+).

This sequence belongs to the PRA-CH family. In terms of assembly, homodimer. The cofactor is Mg(2+). Zn(2+) serves as cofactor.

The protein resides in the cytoplasm. The enzyme catalyses 1-(5-phospho-beta-D-ribosyl)-5'-AMP + H2O = 1-(5-phospho-beta-D-ribosyl)-5-[(5-phospho-beta-D-ribosylamino)methylideneamino]imidazole-4-carboxamide. Its pathway is amino-acid biosynthesis; L-histidine biosynthesis; L-histidine from 5-phospho-alpha-D-ribose 1-diphosphate: step 3/9. Catalyzes the hydrolysis of the adenine ring of phosphoribosyl-AMP. The chain is Phosphoribosyl-AMP cyclohydrolase from Brucella abortus (strain S19).